The primary structure comprises 71 residues: Plasticin-DA1 (71 aa).

The first 22 residues, 1–22, serve as a signal peptide directing secretion; it reads MAFLKKSLFLVLFLALVPLSIC. Positions 23–42 are excised as a propeptide; sequence EAEKREEENEEKQEDDDESE. The segment at 25–45 is disordered; that stretch reads EKREEENEEKQEDDDESEKKR. Over residues 30–40 the composition is skewed to acidic residues; that stretch reads ENEEKQEDDDE. Position 68 is a glycine amide (Gly-68). The propeptide occupies 70-71; the sequence is ER.

Belongs to the frog skin active peptide (FSAP) family. Plasticin subfamily. In terms of tissue distribution, expressed by the skin glands.

The protein localises to the secreted. It is found in the target cell membrane. Functionally, neutral peptide with no antimicrobial activity. Does not permeate bacterial membranes. May act in synergy with cationic peptides by enhancing their activity. Has a moderate hemolytic activity. It interacts with zwitterionic phospholipids (DMPC) without perturbing either the interface or inside of the bilayer, whereas it causes little perturbations at the interface peptide-anionic vesicles (DMPG) as well as in the bilayer alkyl chains. The sequence is that of Plasticin-DA1 from Agalychnis dacnicolor (Giant Mexican leaf frog).